We begin with the raw amino-acid sequence, 319 residues long: Thioredoxin reductase 1 (319 aa).

FAD-binding positions include 11-14 (SGPA), 40-41 (IA), Gln45, Asn54, Val87, Cys145, Asp288, and 295-297 (RQA). Cysteines 142 and 145 form a disulfide. Phosphoserine is present on Ser303.

It belongs to the class-II pyridine nucleotide-disulfide oxidoreductase family. In terms of assembly, homodimer. It depends on FAD as a cofactor.

It localises to the cytoplasm. The protein localises to the mitochondrion intermembrane space. The enzyme catalyses [thioredoxin]-dithiol + NADP(+) = [thioredoxin]-disulfide + NADPH + H(+). Functionally, central component in the thioredoxin system. Reduces thioredoxins 1 and 2. The sequence is that of Thioredoxin reductase 1 (TRR1) from Saccharomyces cerevisiae (strain ATCC 204508 / S288c) (Baker's yeast).